The chain runs to 449 residues: Tubulin beta-4 chain (449 aa).

An MREI motif motif is present at residues methionine 1–isoleucine 4. Positions 11, 69, 138, 142, 143, 144, 204, and 226 each coordinate GTP. Glutamate 69 provides a ligand contact to Mg(2+). Residues glutamate 421–lysine 449 form a disordered region. The segment covering threonine 429–lysine 449 has biased composition (acidic residues). Glutamate 438 is subject to 5-glutamyl polyglutamate. The residue at position 444 (serine 444) is a Phosphoserine.

This sequence belongs to the tubulin family. Dimer of alpha and beta chains. A typical microtubule is a hollow water-filled tube with an outer diameter of 25 nm and an inner diameter of 15 nM. Alpha-beta heterodimers associate head-to-tail to form protofilaments running lengthwise along the microtubule wall with the beta-tubulin subunit facing the microtubule plus end conferring a structural polarity. Microtubules usually have 13 protofilaments but different protofilament numbers can be found in some organisms and specialized cells. The cofactor is Mg(2+). Post-translationally, some glutamate residues at the C-terminus are polyglycylated, resulting in polyglycine chains on the gamma-carboxyl group. Glycylation is mainly limited to tubulin incorporated into axonemes (cilia and flagella) whereas glutamylation is prevalent in neuronal cells, centrioles, axonemes, and the mitotic spindle. Both modifications can coexist on the same protein on adjacent residues, and lowering polyglycylation levels increases polyglutamylation, and reciprocally. The precise function of polyglycylation is still unclear. Some glutamate residues at the C-terminus are polyglutamylated, resulting in polyglutamate chains on the gamma-carboxyl group. Polyglutamylation plays a key role in microtubule severing by spastin (SPAST). SPAST preferentially recognizes and acts on microtubules decorated with short polyglutamate tails: severing activity by SPAST increases as the number of glutamates per tubulin rises from one to eight, but decreases beyond this glutamylation threshold. Neuron specific.

The protein resides in the cytoplasm. Its subcellular location is the cytoskeleton. In terms of biological role, tubulin is the major constituent of microtubules, a cylinder consisting of laterally associated linear protofilaments composed of alpha- and beta-tubulin heterodimers. Microtubules grow by the addition of GTP-tubulin dimers to the microtubule end, where a stabilizing cap forms. Below the cap, tubulin dimers are in GDP-bound state, owing to GTPase activity of alpha-tubulin. This chain is Tubulin beta-4 chain, found in Gallus gallus (Chicken).